The primary structure comprises 431 residues: uncharacterized protein (431 aa).

2 disordered regions span residues 1–37 (MFWR…KLTP) and 102–132 (PPPL…RRVA). Residues 22–32 (GDFRRSSDPRL) are compositionally biased toward basic and acidic residues. Residues 106 to 121 (LSAGASRESAPRQPGP) show a composition bias toward low complexity. Over residues 122-132 (GERERPRRRVA) the composition is skewed to basic and acidic residues.

It localises to the cytoplasm. This is an uncharacterized protein from Homo sapiens (Human).